We begin with the raw amino-acid sequence, 735 residues long: Ion-translocating oxidoreductase complex subunit C (735 aa).

2 consecutive 4Fe-4S ferredoxin-type domains span residues 368–397 (MGAP…QQLY) and 407–436 (KATA…VQYF). [4Fe-4S] cluster is bound by residues C377, C380, C383, C387, C416, C419, C422, and C426. The disordered stretch occupies residues 534–715 (QARAKQAAHP…AVDPRKAAVA (182 aa)). Low complexity predominate over residues 666 to 689 (QQAGSEPAEPAAPRKAAVEAAIAR).

Belongs to the 4Fe4S bacterial-type ferredoxin family. RnfC subfamily. As to quaternary structure, the complex is composed of six subunits: RsxA, RsxB, RsxC, RsxD, RsxE and RsxG. It depends on [4Fe-4S] cluster as a cofactor.

Its subcellular location is the cell inner membrane. Part of a membrane-bound complex that couples electron transfer with translocation of ions across the membrane. Required to maintain the reduced state of SoxR. This chain is Ion-translocating oxidoreductase complex subunit C, found in Salmonella paratyphi B (strain ATCC BAA-1250 / SPB7).